The chain runs to 268 residues: Hemin import ATP-binding protein HmuV (268 aa).

The region spanning 5 to 242 is the ABC transporter domain; it reads IEARHLSKRA…ETIRDIFEID (238 aa). 37–44 is an ATP binding site; the sequence is GPNGAGKS.

Belongs to the ABC transporter superfamily. Heme (hemin) importer (TC 3.A.1.14.5) family. In terms of assembly, the complex is composed of two ATP-binding proteins (HmuV), two transmembrane proteins (HmuU) and a solute-binding protein (HmuT).

The protein resides in the cell inner membrane. Part of the ABC transporter complex HmuTUV involved in hemin import. Responsible for energy coupling to the transport system. The chain is Hemin import ATP-binding protein HmuV from Bradyrhizobium diazoefficiens (strain JCM 10833 / BCRC 13528 / IAM 13628 / NBRC 14792 / USDA 110).